A 524-amino-acid polypeptide reads, in one-letter code: Probable metalloreductase AIM14 (524 aa).

The next 7 helical transmembrane spans lie at Val-24–Ile-44, Ser-69–Phe-89, Arg-104–Leu-121, Trp-143–Trp-163, Phe-179–Met-199, Leu-206–Ala-226, and Val-230–Phe-250. A Ferric oxidoreductase domain is found at Leu-105–Ile-222. An FAD-binding FR-type domain is found at Arg-248–Pro-372.

It belongs to the ferric reductase (FRE) family. AIM14 subfamily.

It is found in the membrane. Functionally, probable cell surface metalloreductase. May be involved in iron or copper homeostasis. The protein is Probable metalloreductase AIM14 (AIM14) of Scheffersomyces stipitis (strain ATCC 58785 / CBS 6054 / NBRC 10063 / NRRL Y-11545) (Yeast).